Here is a 698-residue protein sequence, read N- to C-terminus: Colicin V secretion/processing ATP-binding protein CvaB (698 aa).

In terms of domain architecture, Peptidase C39 spans 26 to 145; the sequence is QTETAECGLA…RYFTGVALEV (120 aa). The active site involves Cys32. 7 helical membrane passes run 33–53, 92–112, 176–196, 211–231, 289–311, 315–334, and 412–432; these read GLACLAMICGHFGKNIDLIYL, VLKTPCILHWDFSHFVVLVSV, LAKIFCLSVVIEAINLLMPVG, GLLTLISAALMFFILLKAATS, TSVIGFIMDSIMVVGVCVMMLLY, LTWIVLCFTTIYIFIRLVTY, and IVILWLGAGLVIDNQMTIGMF. The ABC transmembrane type-1 domain maps to 176–458; sequence LAKIFCLSVV…LTSFLLQLRI (283 aa). Positions 492 to 698 constitute an ABC transporter domain; it reads LETNGLSYRY…LRTVDRVISI (207 aa). An ATP-binding site is contributed by 526-533; sequence GASGAGKT.

It belongs to the ABC transporter superfamily. Colicin V exporter (TC 3.A.1.110.2) family.

It localises to the cell membrane. Involved, in conjunction with CvaA, in the secretion of colicin V. This chain is Colicin V secretion/processing ATP-binding protein CvaB (cvaB), found in Escherichia coli.